A 61-amino-acid polypeptide reads, in one-letter code: Small ribosomal subunit protein uS14 (61 aa).

C24, C27, C40, and C43 together coordinate Zn(2+).

It belongs to the universal ribosomal protein uS14 family. Zinc-binding uS14 subfamily. In terms of assembly, part of the 30S ribosomal subunit. Contacts proteins S3 and S10. It depends on Zn(2+) as a cofactor.

Its function is as follows. Binds 16S rRNA, required for the assembly of 30S particles and may also be responsible for determining the conformation of the 16S rRNA at the A site. The sequence is that of Small ribosomal subunit protein uS14 from Streptococcus thermophilus (strain CNRZ 1066).